Here is a 261-residue protein sequence, read N- to C-terminus: Type III pantothenate kinase (261 aa).

6–13 (DAGNTNVV) contributes to the ATP binding site. A substrate-binding site is contributed by 108–111 (GADR). Asp-110 functions as the Proton acceptor in the catalytic mechanism. A K(+)-binding site is contributed by Asp-130. An ATP-binding site is contributed by Thr-133. Thr-185 provides a ligand contact to substrate.

It belongs to the type III pantothenate kinase family. Homodimer. Requires NH4(+) as cofactor. The cofactor is K(+).

It localises to the cytoplasm. The catalysed reaction is (R)-pantothenate + ATP = (R)-4'-phosphopantothenate + ADP + H(+). It participates in cofactor biosynthesis; coenzyme A biosynthesis; CoA from (R)-pantothenate: step 1/5. Its function is as follows. Catalyzes the phosphorylation of pantothenate (Pan), the first step in CoA biosynthesis. This chain is Type III pantothenate kinase, found in Rhodospirillum centenum (strain ATCC 51521 / SW).